The chain runs to 132 residues: UPF0299 membrane protein YohJ (132 aa).

Transmembrane regions (helical) follow at residues 7–27, 31–51, 63–83, and 93–113; these read IIWQ…AGIF, LLPI…VLLA, GCYV…VGVM, and FGPV…VVSW.

This sequence belongs to the UPF0299 family.

It localises to the cell inner membrane. The chain is UPF0299 membrane protein YohJ from Salmonella agona (strain SL483).